The primary structure comprises 517 residues: Alpha,alpha-trehalose-phosphate synthase [UDP-forming] 1 (517 aa).

Residues Tyr98 and Asp152 each contribute to the D-glucose 6-phosphate site. UDP-binding residues include Arg288 and Lys293. The UDP-alpha-D-glucose site is built by Arg288 and Lys293. Arg326 serves as a coordination point for D-glucose 6-phosphate. Asp387–Glu395 is a binding site for UDP-alpha-D-glucose. Residue Leu391 to Glu395 participates in UDP binding. The segment at Phe486 to Gln517 is disordered. The segment covering Phe493–Gln517 has biased composition (polar residues).

The protein belongs to the glycosyltransferase 20 family.

It catalyses the reaction D-glucose 6-phosphate + UDP-alpha-D-glucose = alpha,alpha-trehalose 6-phosphate + UDP + H(+). It participates in carbohydrate biosynthesis. Synthase catalytic subunit of the trehalose synthase complex that catalyzes the production of trehalose from glucose-6-phosphate and UDP-alpha-D-glucose in a two step process. The polypeptide is Alpha,alpha-trehalose-phosphate synthase [UDP-forming] 1 (Aspergillus niger).